We begin with the raw amino-acid sequence, 488 residues long: Glutamyl-tRNA(Gln) amidotransferase subunit A (488 aa).

Catalysis depends on charge relay system residues lysine 78 and serine 153. Serine 177 serves as the catalytic Acyl-ester intermediate.

Belongs to the amidase family. GatA subfamily. As to quaternary structure, heterotrimer of A, B and C subunits.

The catalysed reaction is L-glutamyl-tRNA(Gln) + L-glutamine + ATP + H2O = L-glutaminyl-tRNA(Gln) + L-glutamate + ADP + phosphate + H(+). Functionally, allows the formation of correctly charged Gln-tRNA(Gln) through the transamidation of misacylated Glu-tRNA(Gln) in organisms which lack glutaminyl-tRNA synthetase. The reaction takes place in the presence of glutamine and ATP through an activated gamma-phospho-Glu-tRNA(Gln). In Thermoanaerobacter pseudethanolicus (strain ATCC 33223 / 39E) (Clostridium thermohydrosulfuricum), this protein is Glutamyl-tRNA(Gln) amidotransferase subunit A.